A 651-amino-acid chain; its full sequence is Acetyl-coenzyme A synthetase (651 aa).

CoA-binding positions include 189-192, threonine 311, and asparagine 335; that span reads RGGK. ATP contacts are provided by residues 387-389, 411-416, aspartate 500, and arginine 515; these read GEP and DTWWQT. Serine 523 serves as a coordination point for CoA. Arginine 526 is a binding site for ATP. The Mg(2+) site is built by valine 537, histidine 539, and valine 542. Residue arginine 586 participates in CoA binding. At lysine 611 the chain carries N6-acetyllysine.

It belongs to the ATP-dependent AMP-binding enzyme family. Mg(2+) serves as cofactor. In terms of processing, acetylated. Deacetylation by the SIR2-homolog deacetylase activates the enzyme.

The enzyme catalyses acetate + ATP + CoA = acetyl-CoA + AMP + diphosphate. Catalyzes the conversion of acetate into acetyl-CoA (AcCoA), an essential intermediate at the junction of anabolic and catabolic pathways. AcsA undergoes a two-step reaction. In the first half reaction, AcsA combines acetate with ATP to form acetyl-adenylate (AcAMP) intermediate. In the second half reaction, it can then transfer the acetyl group from AcAMP to the sulfhydryl group of CoA, forming the product AcCoA. The protein is Acetyl-coenzyme A synthetase of Brucella suis (strain ATCC 23445 / NCTC 10510).